The primary structure comprises 272 residues: Lectin-like protein At1g53070 (272 aa).

An N-terminal signal peptide occupies residues 1 to 23; it reads MKIQILCFTTLFLAIFTSQVTTA. The segment at 24–271 is legume-lectin like; that stretch reads YKFKFDYFGN…RHEIWDWTFQ (248 aa). N-linked (GlcNAc...) asparagine glycosylation is found at Asn-33, Asn-84, and Asn-134. Residue Ser-241 is modified to Phosphoserine.

This sequence belongs to the leguminous lectin family.

It localises to the secreted. Its subcellular location is the extracellular space. The protein resides in the apoplast. The chain is Lectin-like protein At1g53070 from Arabidopsis thaliana (Mouse-ear cress).